The following is a 469-amino-acid chain: Glutamate--tRNA ligase (469 aa).

Residues 9-19 carry the 'HIGH' region motif; the sequence is PSPTGFLHVGG. Residues Cys-98, Cys-100, Cys-125, and Asp-127 each coordinate Zn(2+). The 'KMSKS' region signature appears at 236 to 240; sequence KLSKR. Residue Lys-239 participates in ATP binding.

This sequence belongs to the class-I aminoacyl-tRNA synthetase family. Glutamate--tRNA ligase type 1 subfamily. In terms of assembly, monomer. Zn(2+) serves as cofactor.

It localises to the cytoplasm. The enzyme catalyses tRNA(Glu) + L-glutamate + ATP = L-glutamyl-tRNA(Glu) + AMP + diphosphate. Its function is as follows. Catalyzes the attachment of glutamate to tRNA(Glu) in a two-step reaction: glutamate is first activated by ATP to form Glu-AMP and then transferred to the acceptor end of tRNA(Glu). The chain is Glutamate--tRNA ligase from Shewanella sediminis (strain HAW-EB3).